A 1255-amino-acid chain; its full sequence is Structural polyprotein (1255 aa).

The tract at residues 1–33 (MFPFQPMYPMQPMPYRNPFAAPRRPWFPRTDPF) is necessary for nucleocapsid assembly and virus assembly. Positions 33-68 (FLAMQVQELTRSMANLTFKQRREAPPEGPPAKKPKR) are host transcription inhibition. Positions 41-48 (LTRSMANL) match the Supraphysiological nuclear export signal motif. A disordered region spans residues 44–119 (SMANLTFKQR…KKPGKRQRMV (76 aa)). N-linked (GlcNAc...) asparagine; by host glycosylation occurs at asparagine 47. The short motif at 64–68 (KKPKR) is the Nuclear localization signal element. Over residues 80–92 (GKKKKNQGKKKAK) the composition is skewed to basic residues. The tract at residues 91–127 (AKTGPPNPKAQNGNKKKTNKKPGKRQRMVMKLESDKT) is binding to the viral RNA. Phosphothreonine occurs at positions 93 and 108. Over residues 104–118 (NKKKTNKKPGKRQRM) the composition is skewed to basic residues. The interval 112–126 (PGKRQRMVMKLESDK) is ribosome-binding. Serine 124 is modified (phosphoserine). Residues 126–275 (KTFPIMLEGK…KYTPENCEQW (150 aa)) enclose the Peptidase S3 domain. The residue at position 127 (threonine 127) is a Phosphothreonine. Residue histidine 152 is the Charge relay system of the active site. The interaction with spike glycoprotein E2 stretch occupies residues 168–173 (KKASKY). Residues aspartate 174 and serine 226 each act as charge relay system in the active site. The interval 260 to 264 (EKGVT) is interaction with spike glycoprotein E2. Residues 276–287 (SLVTTMCLLANV) are functions as an uncleaved signal peptide for the precursor of protein E3/E2. The Extracellular segment spans residues 276–701 (SLVTTMCLLA…HYYHRYPMST (426 aa)). Cystine bridges form between cysteine 282–cysteine 291, cysteine 353–cysteine 457, cysteine 356–cysteine 361, cysteine 424–cysteine 438, cysteine 485–cysteine 600, cysteine 534–cysteine 560, and cysteine 536–cysteine 554. An N-linked (GlcNAc...) asparagine; by host glycan is attached at asparagine 286. Residue asparagine 652 is glycosylated (N-linked (GlcNAc...) asparagine; by host). The chain crosses the membrane as a helical span at residues 702 to 722 (ILGLSICAAIVTVSIAASTWL). The Cytoplasmic portion of the chain corresponds to 723–757 (LCKSRVSCLTPYRLTPNARMPLCLAVLCCARTARA). Positions 725 to 729 (KSRVS) are interaction with the capsid protein. 3 S-palmitoyl cysteine; by host lipidation sites follow: cysteine 730, cysteine 750, and cysteine 751. Positions 730 to 750 (CLTPYRLTPNARMPLCLAVLC) are transient transmembrane before p62-6K protein processing. Cysteines 730 and 751 form a disulfide. The Extracellular segment spans residues 758-772 (ETTWESLDHLWNNNQ). Residues 773–793 (QMFWIQLLIPLAALIVVTRLL) form a helical membrane-spanning segment. Residue arginine 794 is a topological domain, cytoplasmic. The helical transmembrane segment at 795 to 815 (CVCCVVPFLVVAGAAGAGAYE) threads the bilayer. Over 816–1225 (HATTMPSQAG…SKTAWTWLTS (410 aa)) the chain is Extracellular. Cystine bridges form between cysteine 862–cysteine 927, cysteine 875–cysteine 907, cysteine 876–cysteine 909, and cysteine 881–cysteine 891. An E1 fusion peptide loop region spans residues 897–914 (VYPFMWGGAYCFCDTENT). 2 N-linked (GlcNAc...) asparagine; by host glycosylation sites follow: asparagine 947 and asparagine 1083. Intrachain disulfides connect cysteine 1072–cysteine 1084, cysteine 1114–cysteine 1189, cysteine 1119–cysteine 1193, and cysteine 1141–cysteine 1183. The chain crosses the membrane as a helical span at residues 1226–1246 (LLGGSAVIIIIGLVLATIVAM). Over 1247–1255 (YVLTNQKHN) the chain is Cytoplasmic.

In terms of assembly, homodimer. Homomultimer. Interacts with host karyopherin KPNA4; this interaction allows the nuclear import of the viral capsid protein. Interacts with spike glycoprotein E2. Interacts with host IRAK1; the interaction leads to inhibition of IRAK1-dependent signaling. Part of a tetrameric complex composed of host CRM1, host importin alpha/beta dimer and the viral capsid; this complex blocks the receptor-mediated transport through the nuclear pore. Interacts with host phosphatase PPP1CA; this interaction dephosphorylates the capsid protein, which increases its ability to bind to the viral genome. As to quaternary structure, the precursor of protein E3/E2 and E1 form a heterodimer shortly after synthesis. Interacts with spike glycoprotein E2. The precursor of protein E3/E2 and E1 form a heterodimer shortly after synthesis. Processing of the precursor of protein E3/E2 into E2 and E3 results in a heterodimer of the spike glycoproteins E2 and E1. Spike at virion surface are constituted of three E2-E1 heterodimers. After target cell attachment and endocytosis, E1 change conformation to form homotrimers. Interacts with 6K protein. Interacts with host LDLRAD3; this interaction mediates viral entry to the host cell. In terms of assembly, interacts with spike glycoprotein E1. Processing of the precursor of protein E3/E2 into E2 and E3 results in a heterodimer of the spike glycoproteins E2 and E1. Spike at virion surface are constituted of a trimer of E2-E1 heterodimers. Interacts with 6K protein. Interacts with host LDLRAD3; this interaction mediates viral entry to the host cell. As to quaternary structure, oligomer. Interacts with spike glycoprotein E1. Interacts with spike glycoprotein E2. In terms of processing, structural polyprotein: Specific enzymatic cleavages in vivo yield mature proteins. Capsid protein is auto-cleaved during polyprotein translation, unmasking a signal peptide at the N-terminus of the precursor of E3/E2. The remaining polyprotein is then targeted to the host endoplasmic reticulum, where host signal peptidase cleaves it into pE2, 6K and E1 proteins. pE2 is further processed to mature E3 and E2 by host furin in trans-Golgi vesicle. Post-translationally, phosphorylated on serine and threonine residues. Palmitoylated via thioester bonds. These palmitoylations may induce disruption of the C-terminus transmembrane. This would result in the reorientation of E2 C-terminus from lumenal to cytoplasmic side. In terms of processing, N-glycosylated. Post-translationally, palmitoylated via thioester bonds.

Its subcellular location is the virion. It is found in the host cytoplasm. It localises to the host cell membrane. The protein resides in the host nucleus. The protein localises to the virion membrane. Its subcellular location is the host Golgi apparatus. It is found in the host trans-Golgi network. It localises to the host endoplasmic reticulum. It carries out the reaction Autocatalytic release of the core protein from the N-terminus of the togavirus structural polyprotein by hydrolysis of a -Trp-|-Ser- bond.. Functionally, forms an icosahedral capsid with a T=4 symmetry composed of 240 copies of the capsid protein surrounded by a lipid membrane through which penetrate 80 spikes composed of trimers of E1-E2 heterodimers. The capsid protein binds to the viral RNA genome at a site adjacent to a ribosome binding site for viral genome translation following genome release. Possesses a protease activity that results in its autocatalytic cleavage from the nascent structural protein. Following its self-cleavage, the capsid protein transiently associates with ribosomes, and within several minutes the protein binds to viral RNA and rapidly assembles into icosahedric core particles. The resulting nucleocapsid eventually associates with the cytoplasmic domain of the spike glycoprotein E2 at the cell membrane, leading to budding and formation of mature virions. In case of infection, new virions attach to target cells and after clathrin-mediated endocytosis their membrane fuses with the host endosomal membrane. This leads to the release of the nucleocapsid into the cytoplasm, followed by an uncoating event necessary for the genomic RNA to become accessible. The uncoating might be triggered by the interaction of capsid proteins with ribosomes. Binding of ribosomes would release the genomic RNA since the same region is genomic RNA-binding and ribosome-binding. Specifically inhibits interleukin-1 receptor-associated kinase 1/IRAK1-dependent signaling during viral entry, representing a means by which the alphaviruses may evade innate immune detection and activation prior to viral gene expression. Inhibits host transcription. Forms a tetrameric complex with XPO1/CRM1 and the nuclear import receptor importin. This complex blocks the central channel of host nuclear pores thereby inhibiting the receptor-mediated nuclear transport and thus the host mRNA and rRNA transcription. The inhibition of transcription is linked to a cytopathic effect on the host cell. Provides the signal sequence for the translocation of the precursor of protein E3/E2 to the host endoplasmic reticulum. Furin-cleaved E3 remains associated with spike glycoprotein E1 and mediates pH protection of the latter during the transport via the secretory pathway. After virion release from the host cell, the assembly protein E3 is gradually released in the extracellular space. In terms of biological role, plays a role in viral attachment to target host cell, by binding to the cell receptor LDLRAD3. Synthesized as a p62 precursor which is processed by furin at the cell membrane just before virion budding, giving rise to E2-E1 heterodimer. The p62-E1 heterodimer is stable, whereas E2-E1 is unstable and dissociate at low pH. p62 is processed at the last step, presumably to avoid E1 fusion activation before its final export to cell surface. E2 C-terminus contains a transitory transmembrane that would be disrupted by palmitoylation, resulting in reorientation of the C-terminal tail from lumenal to cytoplasmic side. This step is critical since E2 C-terminus is involved in budding by interacting with capsid proteins. This release of E2 C-terminus in cytoplasm occurs lately in protein export, and precludes premature assembly of particles at the endoplasmic reticulum membrane. Its function is as follows. Acts as a viroporin that participates in virus glycoprotein processing and transport to the plasma membrane, cell permeabilization and budding of viral particles. Disrupts the calcium homeostasis of the cell, probably at the endoplasmic reticulum level. This leads to cytoplasmic calcium elevation. Because of its lipophilic properties, the 6K protein is postulated to influence the selection of lipids that interact with the transmembrane domains of the glycoproteins, which, in turn, affects the deformability of the bilayer required for the extreme curvature that occurs as budding proceeds. Present in low amount in virions, about 3% compared to viral glycoproteins. Functionally, class II viral fusion protein. Fusion activity is inactive as long as E1 is bound to E2 in mature virion. After virus attachment to cell receptor LDLRAD3 and endocytosis, acidification of the endosome induce dissociation of E1/E2 heterodimer and concomitant trimerization of the E1 subunits. This E1 trimer is fusion active, and promotes release of viral nucleocapsid in cytoplasm after endosome and viral membrane fusion. Efficient fusion requires the presence of cholesterol and sphingolipid in the target membrane. The polypeptide is Structural polyprotein (Venezuelan equine encephalitis virus (strain 3880) (VEEV)).